The following is a 255-amino-acid chain: 20 kDa chaperonin, chloroplastic (255 aa).

The N-terminal 53 residues, 1–53 (MAATHLTSTSSLTINTLPSFEGLRSASGISKINVSVAYPSFTSRSFRGLVVRA), are a transit peptide targeting the chloroplast. Cpn-10 domain regions lie at residues 54–156 (ASIT…ILET) and 157–255 (DDVK…AVLS).

The protein belongs to the GroES chaperonin family. Forms stable complexes with CPN60 in the presence of ATP.

Its subcellular location is the plastid. It localises to the chloroplast. Its function is as follows. Seems to function only as a co-chaperone, along with cpn60, and in certain cases is essential for the discharge of biologically active proteins from cpn60. The chain is 20 kDa chaperonin, chloroplastic (CPN21) from Spinacia oleracea (Spinach).